We begin with the raw amino-acid sequence, 315 residues long: Small ribosomal subunit biogenesis GTPase RsgA (315 aa).

One can recognise a CP-type G domain in the interval 80-241; the sequence is LSKQTHIIAS…IIDTPGIKGF (162 aa). GTP-binding positions include 129 to 132 and 183 to 191; these read NKVD and GHSGTGKST. Zn(2+)-binding residues include C265, C270, H272, and C278.

It belongs to the TRAFAC class YlqF/YawG GTPase family. RsgA subfamily. As to quaternary structure, monomer. Associates with 30S ribosomal subunit, binds 16S rRNA. Requires Zn(2+) as cofactor.

The protein resides in the cytoplasm. Its function is as follows. One of several proteins that assist in the late maturation steps of the functional core of the 30S ribosomal subunit. Helps release RbfA from mature subunits. May play a role in the assembly of ribosomal proteins into the subunit. Circularly permuted GTPase that catalyzes slow GTP hydrolysis, GTPase activity is stimulated by the 30S ribosomal subunit. The chain is Small ribosomal subunit biogenesis GTPase RsgA from Christiangramia forsetii (strain DSM 17595 / CGMCC 1.15422 / KT0803) (Gramella forsetii).